The following is a 249-amino-acid chain: Probable septum site-determining protein MinC (249 aa).

Positions 115-141 (KPAQEAPAQAEPEAAAAPEPANEPAPA) are disordered. Over residues 118-141 (QEAPAQAEPEAAAAPEPANEPAPA) the composition is skewed to low complexity.

It belongs to the MinC family. In terms of assembly, interacts with MinD and FtsZ.

Functionally, cell division inhibitor that blocks the formation of polar Z ring septums. Rapidly oscillates between the poles of the cell to destabilize FtsZ filaments that have formed before they mature into polar Z rings. Prevents FtsZ polymerization. This chain is Probable septum site-determining protein MinC, found in Marinobacter nauticus (strain ATCC 700491 / DSM 11845 / VT8) (Marinobacter aquaeolei).